Consider the following 724-residue polypeptide: Membrane protein YdfJ (724 aa).

The next 12 membrane-spanning stretches (helical) occupy residues 17–37 (IKAI…AVTL), 179–199 (IVGI…LLIA), 200–220 (GLPI…VLIG), 231–251 (LSLA…FIFT), 277–297 (AVVF…VVNI), 309–329 (LSVL…LSIA), 360–380 (IMLS…SMHL), 512–532 (AIPV…TIVF), 539–559 (LVAV…CVFV), 575–595 (GPIL…LAMD), 627–647 (PVVT…IFAG), and 655–675 (GLAL…TLIP).

It belongs to the resistance-nodulation-cell division (RND) (TC 2.A.6) family. MmpL subfamily.

The protein resides in the cell membrane. This Bacillus subtilis (strain 168) protein is Membrane protein YdfJ (ydfJ).